The primary structure comprises 344 residues: Inositol 2-dehydrogenase/D-chiro-inositol 3-dehydrogenase (344 aa).

It belongs to the Gfo/Idh/MocA family. Homotetramer.

The enzyme catalyses myo-inositol + NAD(+) = scyllo-inosose + NADH + H(+). It catalyses the reaction 1D-chiro-inositol + NAD(+) = scyllo-inosine + NADH + H(+). The protein operates within polyol metabolism; myo-inositol degradation into acetyl-CoA; acetyl-CoA from myo-inositol: step 1/7. In terms of biological role, involved in the oxidation of myo-inositol (MI) and D-chiro-inositol (DCI) to 2-keto-myo-inositol (2KMI or 2-inosose) and 1-keto-D-chiro-inositol (1KDCI), respectively. The sequence is that of Inositol 2-dehydrogenase/D-chiro-inositol 3-dehydrogenase from Bacillus licheniformis (strain ATCC 14580 / DSM 13 / JCM 2505 / CCUG 7422 / NBRC 12200 / NCIMB 9375 / NCTC 10341 / NRRL NRS-1264 / Gibson 46).